The primary structure comprises 887 residues: MQTHEIRQRFIEHFTKAGHTEVPSASLILDDPNLLFVNAGMVPFKPYFLGQQNPPFENGTATSIQKCVRTLDIDEVGITTRHNTFFQMAGNFSFGAYFKEGAITHAWTLLTNPVEEGGLGLDPERLWVTVFTDDDEAAEIWNKKIGVPEHKIQRLGMEDNYWSMGIPGPCGPCSEIYYDRGPEHGQEGGPIVDDTRYIEIWNLVFMENERGEGLGKGNFEIVGKLPKKNIDTGLGIERVACILQDVDNVYETDLLRPVIDVAQEVTGAKYGADQANDVRFRVIADHSRTGLMLMLDGVTPGNEGRGYILRRLLRRIIRSARLLGATGETLEKFMDTVRETMTPSYPEIAENYERIRAVALAEEKSFLKTLESGSQMFDNWAHEAKERGEDTVPGDVAFSLHDTHGFPIDLTQEMAAEADLKVDIDGFHELMAEQKARAKADNNAKKLGHVDQTIYRPFVDNHPTVFTGYENLADEASVLGIIRDGALVETAPEGAAAQVILDRTPFYAEAGGQMADRGEMTSTSGAARVEDVQKVGKKVWVHHVTVSGGELAVGQKVQATVDKAWRHQARQAHSGTHLIHAALREVLGPTAVQAGSMNKPGYLRFDFNYGEQLTEHQLNQIEEIANGAVDSDYQVNTIETSLEEAKAMGAMALFGENYGSEVRVVEIGGPFSMELCGGIHVEHSSQVGPISVLGESSVGSGVRRIEAYTGMDSFRFLSTEKSLVSGLATSLKTPSEELPDRIDALTAKLKAAEKQIQQLRAQQLQGQVGQLVEKAETIGEVKVLAEQLPEGVAAGDLRTLAMDAKNRLGSEPAVVVFASVDGEKVPFVAAANDAAVDKGIKAGELVKTFGEKVAGRGGGKPAMAQGSGSDAAGISAGIEAVKSALRG.

Zn(2+)-binding residues include His-573, His-577, Cys-676, and His-680.

Belongs to the class-II aminoacyl-tRNA synthetase family. Zn(2+) serves as cofactor.

The protein resides in the cytoplasm. It carries out the reaction tRNA(Ala) + L-alanine + ATP = L-alanyl-tRNA(Ala) + AMP + diphosphate. Functionally, catalyzes the attachment of alanine to tRNA(Ala) in a two-step reaction: alanine is first activated by ATP to form Ala-AMP and then transferred to the acceptor end of tRNA(Ala). Also edits incorrectly charged Ser-tRNA(Ala) and Gly-tRNA(Ala) via its editing domain. The polypeptide is Alanine--tRNA ligase (Corynebacterium jeikeium (strain K411)).